The sequence spans 315 residues: Neurogenic differentiation factor 4 (315 aa).

The segment at 39 to 71 (ERGSIDGEEDDEEEEDGEKPKKRGPKKKKMTKA) is disordered. A compositionally biased stretch (acidic residues) spans 44–55 (DGEEDDEEEEDG). A compositionally biased stretch (basic residues) spans 58–70 (PKKRGPKKKKMTK). The 53-residue stretch at 78–130 (VRRVKANARERSRMHGLNDALENLRRVMPCYSKTQKLSKIETLRLARNYIWAL) folds into the bHLH domain. Ser89 is subject to Phosphoserine.

In terms of assembly, efficient DNA binding requires dimerization with another bHLH protein. Forms a heterodimer with the bHLH protein hes2, and weakly interacts with hey1/hrt1. In terms of processing, serine or threonine phosphorylation within the basic region may regulate neurogenic activity. As to expression, first expressed weakly at stage 12 in primary neuronal precursors. At stages 18 and 21, strongly expressed in the cranial ganglions, with weaker expression remaining in the spinal cord. Later, strongly expressed at sites of neuronal differentiation, namely the eye, forebrain and cranial ganglions.

The protein resides in the nucleus. Its function is as follows. Probably acts as a transcriptional activator. Mediates neuronal differentiation. Required for the regulation of amacrine cell fate specification in the retina. The chain is Neurogenic differentiation factor 4 (neurod4) from Xenopus laevis (African clawed frog).